The following is a 462-amino-acid chain: Transcription initiation factor TFIID subunit 7-like (462 aa).

Disordered regions lie at residues 1–97 (MECP…VPDE) and 327–366 (DSRSNNDDDEDEDDEDEDEDEDEDEDEDKEEEEEDCSEEY). Low complexity-rich tracts occupy residues 16 to 30 (STPTVSTSEVTSQQE) and 66 to 77 (DADSSAQAAAQA). Residues 333-365 (DDDEDEDDEDEDEDEDEDEDEDKEEEEEDCSEE) are compositionally biased toward acidic residues. A coiled-coil region spans residues 342 to 462 (DEDEDEDEDE…QEQLQRFLKK (121 aa)).

Belongs to the TAF7 family. As to quaternary structure, TFIID is composed of TATA binding protein (TBP) and a number of TBP-associated factors (TAFs). TAF7L may replace TAF7 in a spermatogenesis-specific form of TFIID. Interacts with TBP; the interaction occurs in a sub-population of cells (pachytene and haploid round spermatids) and is developmentally regulated through differential intracellular localization of the two proteins. Interacts with TAF1. As to expression, testis-specific.

It is found in the nucleus. The protein localises to the cytoplasm. Its function is as follows. Probably functions as a spermatogenesis-specific component of the DNA-binding general transcription factor complex TFIID, a multimeric protein complex that plays a central role in mediating promoter responses to various activators and repressors. May play a role in spermatogenesis. The protein is Transcription initiation factor TFIID subunit 7-like (TAF7L) of Homo sapiens (Human).